The primary structure comprises 422 residues: Glucuronoxylanase XynC (422 aa).

Positions 1–32 (MIPRIKKTICVLLVCFTMLSVMLGPGATEVLA) are cleaved as a signal peptide. Residue E171 is the Proton donor of the active site. The Nucleophile role is filled by E260.

The protein belongs to the glycosyl hydrolase 30 family.

The protein resides in the secreted. It catalyses the reaction Endohydrolysis of (1-&gt;4)-beta-D-xylosyl links in some glucuronoarabinoxylans.. Its pathway is glycan degradation; xylan degradation. Functionally, catalyzes the depolymerization of methylglucuronoxylan (MeGAXn) from different sources. It cleaves the beta-1,4-xylosidic bond penultimate to that linking carbon one of the xylose residue substituted with alpha-1,2-linked 4-O-methyl-D-glucuronate (MeGA). The protein is Glucuronoxylanase XynC (xynC) of Bacillus subtilis (strain 168).